A 282-amino-acid chain; its full sequence is Aldo-keto reductase MT3049 (282 aa).

Y57 functions as the Proton donor in the catalytic mechanism. NADPH-binding residues include L197, V235, R237, S238, A239, R243, S246, N247, and R273.

Belongs to the aldo/keto reductase family.

The chain is Aldo-keto reductase MT3049 from Mycobacterium tuberculosis (strain CDC 1551 / Oshkosh).